The sequence spans 72 residues: Translation initiation factor IF-1 (72 aa).

The 72-residue stretch at Met1–Lys72 folds into the S1-like domain.

The protein belongs to the IF-1 family. In terms of assembly, component of the 30S ribosomal translation pre-initiation complex which assembles on the 30S ribosome in the order IF-2 and IF-3, IF-1 and N-formylmethionyl-tRNA(fMet); mRNA recruitment can occur at any time during PIC assembly.

Its subcellular location is the cytoplasm. Functionally, one of the essential components for the initiation of protein synthesis. Stabilizes the binding of IF-2 and IF-3 on the 30S subunit to which N-formylmethionyl-tRNA(fMet) subsequently binds. Helps modulate mRNA selection, yielding the 30S pre-initiation complex (PIC). Upon addition of the 50S ribosomal subunit IF-1, IF-2 and IF-3 are released leaving the mature 70S translation initiation complex. The sequence is that of Translation initiation factor IF-1 from Bacteroides fragilis (strain ATCC 25285 / DSM 2151 / CCUG 4856 / JCM 11019 / LMG 10263 / NCTC 9343 / Onslow / VPI 2553 / EN-2).